A 213-amino-acid polypeptide reads, in one-letter code: Large ribosomal subunit protein uL18c (213 aa).

The protein belongs to the universal ribosomal protein uL18 family.

The protein localises to the plastid. It is found in the apicoplast. The polypeptide is Large ribosomal subunit protein uL18c (RPL18) (Plasmodium falciparum (isolate 3D7)).